We begin with the raw amino-acid sequence, 416 residues long: CinA-like protein (416 aa).

Belongs to the CinA family.

The protein is CinA-like protein of Amoebophilus asiaticus (strain 5a2).